Here is a 238-residue protein sequence, read N- to C-terminus: Survival of motor neuron-related-splicing factor 30 (238 aa).

Positions 72–132 constitute a Tudor domain; it reads SWKVGDKCMA…KPVEEGRKAK (61 aa). Positions 142-160 match the Nuclear localization signal motif; it reads KKEMIAQQREYKKKKALKK. At S201 the chain carries Phosphoserine. K219 is subject to N6-acetyllysine.

The protein belongs to the SMN family. Associates with spliceosomes. Associates with U4/U5/U6 tri-snRNP and with U2 snRNP.

The protein localises to the nucleus speckle. It is found in the nucleus. Its subcellular location is the cajal body. Its function is as follows. Involved in spliceosome assembly. The chain is Survival of motor neuron-related-splicing factor 30 (SMNDC1) from Bos taurus (Bovine).